We begin with the raw amino-acid sequence, 394 residues long: Protein NDRG1 (394 aa).

At Ser-2 the chain carries N-acetylserine. Phosphoserine is present on residues Ser-2, Ser-319, and Ser-326. The segment at 325–394 is disordered; the sequence is RSRTASGSSV…AGPKSMEVSC (70 aa). Over residues 327–339 the composition is skewed to polar residues; it reads RTASGSSVTSLDG. Thr-328 is modified (phosphothreonine; by SGK1). Ser-330 and Ser-332 each carry phosphoserine; by SGK1. The residue at position 333 (Ser-333) is a Phosphoserine. Thr-335 carries the phosphothreonine modification. At Ser-336 the chain carries Phosphoserine. A run of 3 repeats spans residues 339–348, 349–358, and 359–368. The segment at 339–368 is 3 X 10 AA tandem repeats of G-T-R-S-R-S-H-T-S-E; the sequence is GTRSRSHTSEGTRSRSHTSEGTRSRSHTSE. Position 340 is a phosphothreonine (Thr-340). Ser-342 carries the phosphoserine modification. Residues 345 to 371 show a composition bias toward basic and acidic residues; sequence HTSEGTRSRSHTSEGTRSRSHTSEGAH. Thr-346 is subject to Phosphothreonine; by SGK1. Ser-352 is subject to Phosphoserine. Position 356 is a phosphothreonine; by SGK1 (Thr-356). A Phosphoserine modification is found at Ser-362. A Phosphoserine; by SGK1 modification is found at Ser-364. Residue Thr-366 is modified to Phosphothreonine; by SGK1. Residue Thr-375 is modified to Phosphothreonine.

It belongs to the NDRG family. As to quaternary structure, interacts with RAB4A (membrane-bound form); the interaction involves NDRG1 in vesicular recycling of CDH1. Under stress conditions, phosphorylated in the C-terminal on many serine and threonine residues. Phosphorylated in vitro by PKA. Phosphorylation enhanced by increased intracellular cAMP levels. Homocysteine induces dephosphorylation. Phosphorylation by SGK1 is cell cycle dependent. As to expression, ubiquitous; expressed most prominently in placental membranes and prostate, kidney, small intestine, and ovary tissues. Also expressed in heart, brain, skeletal muscle, lung, liver and pancreas. Low levels in peripheral blood leukocytes and in tissues of the immune system. Expressed mainly in epithelial cells. Also found in Schwann cells of peripheral neurons. Reduced expression in adenocarcinomas compared to normal tissues. In colon, prostate and placental membranes, the cells that border the lumen show the highest expression.

It is found in the cytoplasm. Its subcellular location is the cytosol. It localises to the cytoskeleton. The protein resides in the microtubule organizing center. The protein localises to the centrosome. It is found in the nucleus. Its subcellular location is the cell membrane. Stress-responsive protein involved in hormone responses, cell growth, and differentiation. Acts as a tumor suppressor in many cell types. Necessary but not sufficient for p53/TP53-mediated caspase activation and apoptosis. Has a role in cell trafficking, notably of the Schwann cell, and is necessary for the maintenance and development of the peripheral nerve myelin sheath. Required for vesicular recycling of CDH1 and TF. May also function in lipid trafficking. Protects cells from spindle disruption damage. Functions in p53/TP53-dependent mitotic spindle checkpoint. Regulates microtubule dynamics and maintains euploidy. The protein is Protein NDRG1 (NDRG1) of Homo sapiens (Human).